Here is a 62-residue protein sequence, read N- to C-terminus: U10-buthitoxin-Hj1a (62 aa).

Residues 1 to 22 (MQKIFIILVLFCILKFNVDVEG) form the signal peptide. Intrachain disulfides connect Cys28-Cys46, Cys33-Cys59, and Cys37-Cys61.

This sequence belongs to the short scorpion toxin superfamily. Potassium channel inhibitor family. Alpha-KTx 23 subfamily. In terms of tissue distribution, expressed by the venom gland.

It is found in the secreted. Its function is as follows. May block potassium channels. The protein is U10-buthitoxin-Hj1a of Hottentotta judaicus (Black scorpion).